Here is a 105-residue protein sequence, read N- to C-terminus: MKFLALFFLALAGVAFAHDGGMGGMDMIKSYSILGAMIGLGIAAFGGAIGMGNAAAATITGTARNPGVGGKLLTTMFVAMAMIEAQVIYTLVFAIIAIYSNPFLS.

3 helical membrane-spanning segments follow: residues 3-23 (FLAL…GGMG), 32-52 (SILG…IGMG), and 78-98 (VAMA…IIAI).

Belongs to the ATPase C chain family. In terms of assembly, F-type ATPases have 2 components, F(1) - the catalytic core - and F(0) - the membrane proton channel. F(1) has five subunits: alpha(3), beta(3), gamma(1), delta(1), epsilon(1). F(0) has three main subunits: a(1), b(2) and c(10-14). The alpha and beta chains form an alternating ring which encloses part of the gamma chain. F(1) is attached to F(0) by a central stalk formed by the gamma and epsilon chains, while a peripheral stalk is formed by the delta and b chains.

Its subcellular location is the cell inner membrane. F(1)F(0) ATP synthase produces ATP from ADP in the presence of a proton or sodium gradient. F-type ATPases consist of two structural domains, F(1) containing the extramembraneous catalytic core and F(0) containing the membrane proton channel, linked together by a central stalk and a peripheral stalk. During catalysis, ATP synthesis in the catalytic domain of F(1) is coupled via a rotary mechanism of the central stalk subunits to proton translocation. Its function is as follows. Key component of the F(0) channel; it plays a direct role in translocation across the membrane. A homomeric c-ring of between 10-14 subunits forms the central stalk rotor element with the F(1) delta and epsilon subunits. This chain is ATP synthase subunit c, found in Helicobacter pylori (strain P12).